The sequence spans 511 residues: Glutamyl-tRNA(Gln) amidotransferase subunit A, mitochondrial (511 aa).

Active-site charge relay system residues include lysine 72 and serine 149. Serine 173 functions as the Acyl-ester intermediate in the catalytic mechanism.

Belongs to the amidase family. GatA subfamily. Subunit of the heterotrimeric GatCAB amidotransferase (AdT) complex, composed of A, B and C subunits.

The protein resides in the mitochondrion. It carries out the reaction L-glutamyl-tRNA(Gln) + L-glutamine + ATP + H2O = L-glutaminyl-tRNA(Gln) + L-glutamate + ADP + phosphate + H(+). Its function is as follows. Allows the formation of correctly charged Gln-tRNA(Gln) through the transamidation of misacylated Glu-tRNA(Gln) in the mitochondria. The reaction takes place in the presence of glutamine and ATP through an activated gamma-phospho-Glu-tRNA(Gln). The polypeptide is Glutamyl-tRNA(Gln) amidotransferase subunit A, mitochondrial (Fusarium vanettenii (strain ATCC MYA-4622 / CBS 123669 / FGSC 9596 / NRRL 45880 / 77-13-4) (Fusarium solani subsp. pisi)).